The following is a 269-amino-acid chain: 2-keto-4-pentenoate hydratase (269 aa).

This sequence belongs to the hydratase/decarboxylase family. MhpD subfamily. A divalent metal cation is required as a cofactor.

It carries out the reaction (S)-4-hydroxy-2-oxopentanoate = (2Z)-2-hydroxypenta-2,4-dienoate + H2O. It functions in the pathway aromatic compound metabolism; 3-phenylpropanoate degradation. Its function is as follows. Catalyzes the conversion of 2-hydroxypentadienoic acid (enolic form of 2-oxopent-4-enoate) to 4-hydroxy-2-ketopentanoic acid. This is 2-keto-4-pentenoate hydratase from Paraburkholderia xenovorans (strain LB400).